The following is a 121-amino-acid chain: Dihydroneopterin aldolase (121 aa).

Positions 16 and 111 each coordinate substrate.

It belongs to the archaeal dihydroneopterin aldolase family. In terms of assembly, homotetramer.

It catalyses the reaction 7,8-dihydroneopterin = 6-hydroxymethyl-7,8-dihydropterin + glycolaldehyde. It participates in cofactor biosynthesis; 5,6,7,8-tetrahydromethanopterin biosynthesis. In terms of biological role, catalyzes the conversion of 7,8-dihydroneopterin (H2Neo) to 6-hydroxymethyl-7,8-dihydropterin (6-HMD). The protein is Dihydroneopterin aldolase of Methanopyrus kandleri (strain AV19 / DSM 6324 / JCM 9639 / NBRC 100938).